The primary structure comprises 284 residues: uncharacterized protein (284 aa).

This is an uncharacterized protein from Acanthamoeba polyphaga (Amoeba).